We begin with the raw amino-acid sequence, 201 residues long: Peptidyl-tRNA hydrolase (201 aa).

Tyr-17 is a binding site for tRNA. Residue His-22 is the Proton acceptor of the active site. Residues Tyr-68, Asn-70, and Asn-116 each coordinate tRNA.

The protein belongs to the PTH family. Monomer.

The protein resides in the cytoplasm. The enzyme catalyses an N-acyl-L-alpha-aminoacyl-tRNA + H2O = an N-acyl-L-amino acid + a tRNA + H(+). In terms of biological role, hydrolyzes ribosome-free peptidyl-tRNAs (with 1 or more amino acids incorporated), which drop off the ribosome during protein synthesis, or as a result of ribosome stalling. Its function is as follows. Catalyzes the release of premature peptidyl moieties from peptidyl-tRNA molecules trapped in stalled 50S ribosomal subunits, and thus maintains levels of free tRNAs and 50S ribosomes. The protein is Peptidyl-tRNA hydrolase of Lawsonia intracellularis (strain PHE/MN1-00).